The primary structure comprises 362 residues: MAQIFNFSSGPAMLPAEVLKQAQQELRDWNGLGTSVMEVSHRGKEFIQVAEEAEKDFRDLLNVPSNYKVLFCHGGGRGQFAAVPLNILGDKTTADYVDAGYWAASAIKEAKKYCTPNVFDAKVTVDGLRAVKPMREWQLSDNAAYMHYCPNETIDGIAIDETPDFGADVVVAADFSSTILSRPIDVSRYGVIYAGAQKNIGPAGLTIVIVREDLLGKANIACPSILDYSILNDNGSMFNTPPTFAWYLSGLVFKWLKANGGVAEMDKINQQKAELLYGVIDNSDFYRNDVAKANRSRMNVPFQLADSALDKLFLEESFAAGLHALKGHRVVGGMRASIYNAMPLEGVKALTDFMVEFERRHG.

L-glutamate-binding residues include serine 9 and arginine 42. Pyridoxal 5'-phosphate is bound by residues 76–77 (GR), tryptophan 102, threonine 153, aspartate 174, and glutamine 197. Lysine 198 bears the N6-(pyridoxal phosphate)lysine mark. Position 239–240 (239–240 (NT)) interacts with pyridoxal 5'-phosphate.

Belongs to the class-V pyridoxal-phosphate-dependent aminotransferase family. SerC subfamily. Homodimer. It depends on pyridoxal 5'-phosphate as a cofactor.

The protein localises to the cytoplasm. It catalyses the reaction O-phospho-L-serine + 2-oxoglutarate = 3-phosphooxypyruvate + L-glutamate. The catalysed reaction is 4-(phosphooxy)-L-threonine + 2-oxoglutarate = (R)-3-hydroxy-2-oxo-4-phosphooxybutanoate + L-glutamate. It functions in the pathway amino-acid biosynthesis; L-serine biosynthesis; L-serine from 3-phospho-D-glycerate: step 2/3. Its pathway is cofactor biosynthesis; pyridoxine 5'-phosphate biosynthesis; pyridoxine 5'-phosphate from D-erythrose 4-phosphate: step 3/5. Catalyzes the reversible conversion of 3-phosphohydroxypyruvate to phosphoserine and of 3-hydroxy-2-oxo-4-phosphonooxybutanoate to phosphohydroxythreonine. Is involved in both pyridoxine and serine biosynthesis. The chain is Phosphoserine aminotransferase (serC) from Escherichia coli (strain K12).